The chain runs to 354 residues: Uroporphyrinogen decarboxylase (354 aa).

Substrate-binding positions include 27–31, Asp-77, Tyr-153, Thr-208, and His-326; that span reads RQAGR.

This sequence belongs to the uroporphyrinogen decarboxylase family. In terms of assembly, homodimer.

It localises to the cytoplasm. The enzyme catalyses uroporphyrinogen III + 4 H(+) = coproporphyrinogen III + 4 CO2. It participates in porphyrin-containing compound metabolism; protoporphyrin-IX biosynthesis; coproporphyrinogen-III from 5-aminolevulinate: step 4/4. Catalyzes the decarboxylation of four acetate groups of uroporphyrinogen-III to yield coproporphyrinogen-III. The chain is Uroporphyrinogen decarboxylase from Neisseria meningitidis serogroup C / serotype 2a (strain ATCC 700532 / DSM 15464 / FAM18).